A 366-amino-acid polypeptide reads, in one-letter code: Chorismate synthase (366 aa).

2 residues coordinate NADP(+): Arg48 and Arg54. FMN is bound by residues 125-127, 238-239, Gly278, 293-297, and Arg319; these read RSS, NA, and KPTSS.

It belongs to the chorismate synthase family. As to quaternary structure, homotetramer. Requires FMNH2 as cofactor.

It catalyses the reaction 5-O-(1-carboxyvinyl)-3-phosphoshikimate = chorismate + phosphate. It participates in metabolic intermediate biosynthesis; chorismate biosynthesis; chorismate from D-erythrose 4-phosphate and phosphoenolpyruvate: step 7/7. In terms of biological role, catalyzes the anti-1,4-elimination of the C-3 phosphate and the C-6 proR hydrogen from 5-enolpyruvylshikimate-3-phosphate (EPSP) to yield chorismate, which is the branch point compound that serves as the starting substrate for the three terminal pathways of aromatic amino acid biosynthesis. This reaction introduces a second double bond into the aromatic ring system. The protein is Chorismate synthase of Burkholderia ambifaria (strain ATCC BAA-244 / DSM 16087 / CCUG 44356 / LMG 19182 / AMMD) (Burkholderia cepacia (strain AMMD)).